A 254-amino-acid chain; its full sequence is tRNA pseudouridine synthase A (254 aa).

Aspartate 52 (nucleophile) is an active-site residue. A substrate-binding site is contributed by tyrosine 111.

This sequence belongs to the tRNA pseudouridine synthase TruA family. As to quaternary structure, homodimer.

The catalysed reaction is uridine(38/39/40) in tRNA = pseudouridine(38/39/40) in tRNA. Its function is as follows. Formation of pseudouridine at positions 38, 39 and 40 in the anticodon stem and loop of transfer RNAs. The sequence is that of tRNA pseudouridine synthase A from Methylobacterium nodulans (strain LMG 21967 / CNCM I-2342 / ORS 2060).